A 34-amino-acid polypeptide reads, in one-letter code: DDIT3 upstream open reading frame protein (34 aa).

In terms of assembly, interacts with DDIT3 (isoform 1).

It is found in the nucleus. It localises to the cytoplasm. Functionally, product of the upstream open reading frame (uORF) of DDIT3/CHOP that is specifically produced in absence of stress, thereby preventing translation of downstream stress effector DDIT3/CHOP. This Homo sapiens (Human) protein is DDIT3 upstream open reading frame protein.